The chain runs to 142 residues: MNRTMFKSKIHRATVTHADLHYVGSVTVDLDLLEAADILPGELVAIVDVTNGARLETYTIAGERGSGVIGINGAAAHLMHENDIVILITYAEMTTEEAKAYTPKVVHVDKDNKIVQIGNDPAEGHTRGLMRPPFALNNSALN.

The active-site Schiff-base intermediate with substrate; via pyruvic acid is the Ser-25. Ser-25 bears the Pyruvic acid (Ser) mark. Substrate is bound at residue Thr-57. The active-site Proton donor is Tyr-58. 73 to 75 is a binding site for substrate; it reads GAA.

It belongs to the PanD family. As to quaternary structure, heterooctamer of four alpha and four beta subunits. Pyruvate serves as cofactor. Is synthesized initially as an inactive proenzyme, which is activated by self-cleavage at a specific serine bond to produce a beta-subunit with a hydroxyl group at its C-terminus and an alpha-subunit with a pyruvoyl group at its N-terminus.

The protein resides in the cytoplasm. The enzyme catalyses L-aspartate + H(+) = beta-alanine + CO2. It participates in cofactor biosynthesis; (R)-pantothenate biosynthesis; beta-alanine from L-aspartate: step 1/1. In terms of biological role, catalyzes the pyruvoyl-dependent decarboxylation of aspartate to produce beta-alanine. This is Aspartate 1-decarboxylase from Arthrobacter sp. (strain FB24).